The sequence spans 284 residues: MARLVRVARSSSLFGFGNRFYSTSAEASHASSPSPFLHGGGASRVAPKDRNVQWVFLGCPGVGKGTYASRLSTLLGVPHIATGDLVREELASSGPLSQKLSEIVNQGKLVSDEIIVDLLSKRLEAGEARGESGFILDGFPRTMRQAEILGDVTDIDLVVNLKLPEEVLVDKCLGRRTCSQCGKGFNVAHINLKGENGRPGISMDPLLPPHQCMSKLVTRADDTEEVVKARLRIYNETSQPLEEYYRTKGKLMEFDLPGGIPESWPRLLEALRLDDYEEKQSVAA.

The N-terminal 36 residues, 1-36 (MARLVRVARSSSLFGFGNRFYSTSAEASHASSPSPF), are a transit peptide targeting the chloroplast. 61–66 (GVGKGT) contributes to the ATP binding site. Positions 81–110 (ATGDLVREELASSGPLSQKLSEIVNQGKLV) are NMP. Residues Thr-82, Arg-87, 108 to 110 (KLV), 138 to 141 (GFPR), and Gln-145 each bind AMP. The LID stretch occupies residues 174–222 (GRRTCSQCGKGFNVAHINLKGENGRPGISMDPLLPPHQCMSKLVTRADD). Residue Arg-175 coordinates ATP. Arg-219 and Arg-230 together coordinate AMP. Residue Gly-258 coordinates ATP.

Belongs to the adenylate kinase family. As to quaternary structure, monomer. In terms of tissue distribution, highly expressed in flowers and at lower levels in roots, leaves and stems.

The protein resides in the plastid. The protein localises to the chloroplast stroma. The catalysed reaction is AMP + ATP = 2 ADP. Functionally, catalyzes the reversible transfer of the terminal phosphate group between ATP and AMP. Plays an important role in cellular energy homeostasis, adenine nucleotide metabolism and plant growth. The chain is Adenylate kinase 1, chloroplastic (ADK) from Arabidopsis thaliana (Mouse-ear cress).